Here is a 315-residue protein sequence, read N- to C-terminus: Methionyl-tRNA formyltransferase (315 aa).

Residue 113–116 (SLLP) coordinates (6S)-5,6,7,8-tetrahydrofolate.

This sequence belongs to the Fmt family.

It catalyses the reaction L-methionyl-tRNA(fMet) + (6R)-10-formyltetrahydrofolate = N-formyl-L-methionyl-tRNA(fMet) + (6S)-5,6,7,8-tetrahydrofolate + H(+). Its function is as follows. Attaches a formyl group to the free amino group of methionyl-tRNA(fMet). The formyl group appears to play a dual role in the initiator identity of N-formylmethionyl-tRNA by promoting its recognition by IF2 and preventing the misappropriation of this tRNA by the elongation apparatus. The polypeptide is Methionyl-tRNA formyltransferase (Klebsiella pneumoniae (strain 342)).